A 530-amino-acid chain; its full sequence is ATP-dependent RNA helicase DBP3 (530 aa).

Positions 1 to 20 (MSKDEIKDKKRKSEEYEVVD) are enriched in basic and acidic residues. Positions 1–77 (MSKDEIKDKK…VASVSTSSTV (77 aa)) are disordered. The stretch at 19–58 (VDKKKHKKDKKDKKEKKDKKEKKLKKDKKDKKDKKETKSE) forms a coiled coil. Basic residues predominate over residues 21-50 (KKKHKKDKKDKKEKKDKKEKKLKKDKKDKK). Low complexity predominate over residues 67–77 (SVASVSTSSTV). Positions 117-143 (LSFSHISLDSRIQAEISKFPKPTPIQA) match the Q motif motif. Positions 146 to 322 (WPYLLAGKDV…STFMNSPIKV (177 aa)) constitute a Helicase ATP-binding domain. 159-166 (AETGSGKT) provides a ligand contact to ATP. The short motif at 269–272 (DEAD) is the DEAD box element. One can recognise a Helicase C-terminal domain in the interval 351-500 (KLLELLKKYQ…PVPEELKKFG (150 aa)).

The protein belongs to the DEAD box helicase family. DDX5/DBP2 subfamily.

The protein localises to the nucleus. Its subcellular location is the nucleolus. It carries out the reaction ATP + H2O = ADP + phosphate + H(+). In terms of biological role, ATP-dependent RNA helicase required for 60S ribosomal subunit synthesis. Involved in efficient pre-rRNA processing, predominantly at site A3, which is necessary for the normal formation of 25S and 5.8S rRNAs. The protein is ATP-dependent RNA helicase DBP3 (DBP3) of Vanderwaltozyma polyspora (strain ATCC 22028 / DSM 70294 / BCRC 21397 / CBS 2163 / NBRC 10782 / NRRL Y-8283 / UCD 57-17) (Kluyveromyces polysporus).